The primary structure comprises 142 residues: Large ribosomal subunit protein uL13 (142 aa).

Belongs to the universal ribosomal protein uL13 family. As to quaternary structure, part of the 50S ribosomal subunit.

Functionally, this protein is one of the early assembly proteins of the 50S ribosomal subunit, although it is not seen to bind rRNA by itself. It is important during the early stages of 50S assembly. The polypeptide is Large ribosomal subunit protein uL13 (Herminiimonas arsenicoxydans).